We begin with the raw amino-acid sequence, 154 residues long: uncharacterized protein (154 aa).

The protein belongs to the MG032/MG096/MG288 family.

This is an uncharacterized protein from Mycoplasma pneumoniae (strain ATCC 29342 / M129 / Subtype 1) (Mycoplasmoides pneumoniae).